A 428-amino-acid chain; its full sequence is Aerobic C4-dicarboxylate transport protein (428 aa).

The next 8 helical transmembrane spans lie at 5–27 (LFKS…GHFY), 47–64 (MIIA…IAGM), 77–99 (ALLY…VNVV), 141–163 (VIGA…FGFA), 184–206 (VIFG…AMAF), 219–241 (LGQL…LGSI), 326–348 (IVHQ…GVTG), and 352–374 (IVLA…LILG).

This sequence belongs to the dicarboxylate/amino acid:cation symporter (DAACS) (TC 2.A.23) family.

The protein localises to the cell inner membrane. In terms of biological role, responsible for the aerobic transport of the dicarboxylates fumarate and malate and to a lesser extent succinate, from the periplasm across the inner membrane. In Escherichia coli O157:H7, this protein is Aerobic C4-dicarboxylate transport protein.